Reading from the N-terminus, the 361-residue chain is Peptide chain release factor 1 (361 aa).

Position 236 is an N5-methylglutamine (Q236).

This sequence belongs to the prokaryotic/mitochondrial release factor family. Methylated by PrmC. Methylation increases the termination efficiency of RF1.

The protein localises to the cytoplasm. Peptide chain release factor 1 directs the termination of translation in response to the peptide chain termination codons UAG and UAA. The protein is Peptide chain release factor 1 of Lactobacillus delbrueckii subsp. bulgaricus (strain ATCC 11842 / DSM 20081 / BCRC 10696 / JCM 1002 / NBRC 13953 / NCIMB 11778 / NCTC 12712 / WDCM 00102 / Lb 14).